We begin with the raw amino-acid sequence, 468 residues long: Malate-2H(+)/Na(+)-lactate antiporter (468 aa).

12 consecutive transmembrane segments (helical) span residues 9-29 (LFEIIIVLGVFLALVLSFTVF), 30-50 (LDLPIQLALFVSWFIAMLLGI), 73-93 (AVLILVSVGALIGTWIAGGVV), 96-116 (LIYYGLEFIHPSIFLLATLII), 136-156 (IAMIAIGEGLGIPLPLVAGAI), 192-212 (LYLSIPAYVITAILFTVVGFM), 233-253 (TFDIHIWMLIPAVLVIVLLAM), 258-278 (MPVIVIGALLGAIWAVVFQGM), 309-329 (IVGMLDSLVVIIFGLGFGGLL), 357-377 (LIVAFLANIFGCAMYVSLILT), 405-425 (LTSGMVPWSDNGIYMAGILGV), and 428-448 (FSYLPFMWLSFVAIGLAIIYG).

This sequence belongs to the NhaC Na(+)/H(+) (TC 2.A.35) antiporter family.

It is found in the cell membrane. Couples proton uptake and Na(+) efflux to the substrate-product malate/lactate antiport, in an electroneutral malate-2H(+)/Na(+)-lactate exchange. Plays a role in supporting growth to high density on malate at reduced protonmotive force. The protein is Malate-2H(+)/Na(+)-lactate antiporter (mleN) of Bacillus subtilis (strain 168).